We begin with the raw amino-acid sequence, 279 residues long: HTH-type transcriptional regulator BhcR (279 aa).

The span at 1–13 (MSVQIRKRGRPRG) shows a compositional bias: basic residues. Residues 1–21 (MSVQIRKRGRPRGRAGGLGAE) are disordered. An HTH iclR-type domain is found at 26-87 (IRALDRALDI…SQTQAWHVGP (62 aa)). Residues 47–66 (LTEIAQRLDMAPSTVHRVLV) constitute a DNA-binding region (H-T-H motif). The 170-residue stretch at 102–271 (LVERARPLLR…ARELSFGMAP (170 aa)) folds into the IclR-ED domain.

Functionally, transcriptional regulator of the bhc gene cluster involved in glycolate and glyoxylate assimilation via the beta-hydroxyaspartate cycle (BHAC). Glyoxylate negatively affects the interaction of BhcR with the promoter region of the bhc gene cluster. This chain is HTH-type transcriptional regulator BhcR, found in Paracoccus denitrificans (strain Pd 1222).